A 1007-amino-acid polypeptide reads, in one-letter code: MAAAETQSLREQPEMEDANSEKSINEENGEVSEDQSQNKHSRHKKKKHKHRSKHKKHKHSSEEDKDKKHKHKHKHKKHKRKEIIDASDKEGMSPAKRTKLDDLALLEDLEKQRALIKAELDNELMEGKVQSGMGLILQGYESGSEEEGEIHEKARNGNRSSTRSSSTKGKLELVDNKITTKKRSKSRSKERTRHRSDKKKSKGGIEIVKEKTTRSKSKERKKSKSPSKRSKSQDQARKSKSPTLRRRSQEKIGKARSPTDDKVKIEDKSKSKDRKKSPIINESRSRDRGKKSRSPVDLRGKSKDRRSRSKERKSKRSETDKEKKPIKSPSKDASSGKENRSPSRRPGRSPKRRSLSPKPRDKSRRSRSPLLNDRRSKQSKSPSRTLSPGRRAKSRSLERKRREPERRRLSSPRTRPRDDILSRRERSKDASPINRWSPTRRRSRSPIRRRSRSPLRRSRSPRRRSRSPRRRDRGRRSRSRLRRRSRSRGGRRRRSRSKVKEDKFKGSLSEGMKVEQESSSDDNLEDFDVEEEDEEALIEQRRIQRQAIVQKYKYLAEDSNMSVPSEPSSPQSSTRTRSPSPDDILERVAADVKEYERENVDTFEASVKAKHNLMTVEQNNGSSQKKLLAPDMFTESDDMFAAYFDSARLRAAGIGKDFKENPNLRDNWTDAEGYYRVNIGEVLDKRYNVYGYTGQGVFSNVVRARDNARANQEVAVKIIRNNELMQKTGLKELEFLKKLNDADPDDKFHCLRLFRHFYHKQHLCLVFEPLSMNLREVLKKYGKDVGLHIKAVRSYSQQLFLALKLLKRCNILHADIKPDNILVNESKTILKLCDFGSASHVADNDITPYLVSRFYRAPEIIIGKSYDYGIDMWSVGCTLYELYTGKILFPGKTNNHMLKLAMDLKGKMPNKMIRKGVFKDQHFDQNLNFMYIEVDKVTEREKVTVMSTINPTKDLLADLIGCQRLPEDQRKKVHQLKDLLDQILMLDPAKRISINQALQHAFIQEKI.

A compositionally biased stretch (polar residues) spans 1–10 (MAAAETQSLR). Residues 1–99 (MAAAETQSLR…EGMSPAKRTK (99 aa)) form a disordered region. Alanine 2 carries the N-acetylalanine modification. A phosphoserine mark is found at serine 8, serine 20, serine 23, and serine 32. Basic residues-rich tracts occupy residues 39-59 (KHSR…KHKH) and 67-81 (KKHK…HKRK). Positions 82–91 (EIIDASDKEG) are enriched in basic and acidic residues. 2 positions are modified to phosphoserine: serine 87 and serine 93. Lysine 99 bears the N6-acetyllysine; alternate mark. Lysine 99 is covalently cross-linked (Glycyl lysine isopeptide (Lys-Gly) (interchain with G-Cter in SUMO2); alternate). Lysine 111 is covalently cross-linked (Glycyl lysine isopeptide (Lys-Gly) (interchain with G-Cter in SUMO2)). Lysine 117 participates in a covalent cross-link: Glycyl lysine isopeptide (Lys-Gly) (interchain with G-Cter in SUMO2); alternate. Lysine 117 is covalently cross-linked (Glycyl lysine isopeptide (Lys-Gly) (interchain with G-Cter in SUMO1); alternate). Serine 131 carries the phosphoserine modification. Phosphotyrosine is present on tyrosine 140. Disordered stretches follow at residues 140 to 533 (YESG…EEED) and 559 to 583 (SNMS…SPDD). Phosphoserine occurs at positions 142, 144, and 166. The segment covering 157–168 (GNRSSTRSSSTK) has biased composition (low complexity). Residues lysine 170 and lysine 177 each participate in a glycyl lysine isopeptide (Lys-Gly) (interchain with G-Cter in SUMO2) cross-link. Basic residues-rich tracts occupy residues 179–202 (TTKK…KKSK) and 214–230 (RSKS…SKRS). Phosphoserine occurs at positions 239, 241, 257, 277, 283, 292, and 294. A compositionally biased stretch (basic and acidic residues) spans 247–270 (RSQEKIGKARSPTDDKVKIEDKSK). Positions 302 to 315 (SKDRRSRSKERKSK) are enriched in basic residues. Positions 316–325 (RSETDKEKKP) are enriched in basic and acidic residues. A phosphoserine mark is found at serine 328, serine 354, serine 356, serine 366, and serine 368. Residues 342 to 367 (PSRRPGRSPKRRSLSPKPRDKSRRSR) show a composition bias toward basic residues. The residue at position 385 (threonine 385) is a Phosphothreonine. A Phosphoserine modification is found at serine 387. 2 stretches are compositionally biased toward basic and acidic residues: residues 395-408 (RSLE…ERRR) and 415-429 (RPRD…RSKD). Phosphoserine is present on residues serine 427, serine 431, and serine 437. Residues 438-497 (PTRRRSRSPIRRRSRSPLRRSRSPRRRSRSPRRRDRGRRSRSRLRRRSRSRGGRRRRSRS) show a composition bias toward basic residues. Phosphoserine occurs at positions 518, 519, 520, 565, 569, 578, and 580. Residues 518-533 (SSSDDNLEDFDVEEED) show a composition bias toward acidic residues. The span at 562–581 (SVPSEPSSPQSSTRTRSPSP) shows a compositional bias: low complexity. Glycyl lysine isopeptide (Lys-Gly) (interchain with G-Cter in SUMO2) cross-links involve residues lysine 593 and lysine 659. Positions 687–1006 (YNVYGYTGQG…ALQHAFIQEK (320 aa)) constitute a Protein kinase domain. Residues 693 to 701 (TGQGVFSNV) and lysine 717 contribute to the ATP site. The residue at position 717 (lysine 717) is an N6-acetyllysine. The active-site Proton acceptor is aspartate 815. Tyrosine 849 carries the phosphotyrosine modification. Serine 852 is subject to Phosphoserine.

The protein belongs to the protein kinase superfamily. CMGC Ser/Thr protein kinase family. Interacts with CLK1 C-terminus. Associates with the U5 snRNP and NCOR1 deacetylase complexes. Identified in the spliceosome C complex. In terms of processing, phosphorylated by CLK1. Autophosphorylated; phosphorylation inhibits interaction with its targets, such as PRPF6 or SMARCA4. Ubiquitous.

The protein resides in the nucleus. It is found in the chromosome. Its subcellular location is the centromere. The protein localises to the kinetochore. It carries out the reaction L-seryl-[protein] + ATP = O-phospho-L-seryl-[protein] + ADP + H(+). The catalysed reaction is L-threonyl-[protein] + ATP = O-phospho-L-threonyl-[protein] + ADP + H(+). In terms of biological role, serine/threonine kinase involved in spliceosomal assembly as well as mitosis and signaling regulation. Connects chromatin mediated regulation of transcription and pre-mRNA splicing. During spliceosomal assembly, interacts with and phosphorylates PRPF6 and PRPF31, components of the U4/U6-U5 tri-small nuclear ribonucleoprotein (snRNP), to facilitate the formation of the spliceosome B complex. Plays a role in regulating transcription and the spindle assembly checkpoint (SAC). Associates with U5 snRNP and NCOR1 deacetylase complexes which may allow a coordination of pre-mRNA splicing with chromatin remodeling events involved in transcriptional regulation. Associates and probably phosphorylates SMARCA4 and NCOR1. Phosphorylates SRSF1. Associates with kinetochores during mitosis and is necessary for recruitment and maintenance of the checkpoint proteins such as MAD1L1 and MAD12L1 at the kinetochores. Phosphorylates and regulates the activity of the transcription factors such as ELK1 and KLF13. Phosphorylates nuclear YAP1 and WWTR1/TAZ which induces nuclear exclusion and regulates Hippo signaling pathway, involved in tissue growth control. The polypeptide is Serine/threonine-protein kinase PRP4 homolog (Homo sapiens (Human)).